The following is a 475-amino-acid chain: Glycogen synthase (475 aa).

Lysine 15 provides a ligand contact to ADP-alpha-D-glucose.

Belongs to the glycosyltransferase 1 family. Bacterial/plant glycogen synthase subfamily.

It carries out the reaction [(1-&gt;4)-alpha-D-glucosyl](n) + ADP-alpha-D-glucose = [(1-&gt;4)-alpha-D-glucosyl](n+1) + ADP + H(+). It functions in the pathway glycan biosynthesis; glycogen biosynthesis. Synthesizes alpha-1,4-glucan chains using ADP-glucose. In Alkaliphilus metalliredigens (strain QYMF), this protein is Glycogen synthase.